Consider the following 106-residue polypeptide: UPF0145 protein GSU2791 (106 aa).

Belongs to the UPF0145 family.

In Geobacter sulfurreducens (strain ATCC 51573 / DSM 12127 / PCA), this protein is UPF0145 protein GSU2791.